Reading from the N-terminus, the 216-residue chain is Thymidylate kinase (216 aa).

10–17 contributes to the ATP binding site; it reads GVDGSGKT.

It belongs to the thymidylate kinase family.

The catalysed reaction is dTMP + ATP = dTDP + ADP. Functionally, phosphorylation of dTMP to form dTDP in both de novo and salvage pathways of dTTP synthesis. In Pelotomaculum thermopropionicum (strain DSM 13744 / JCM 10971 / SI), this protein is Thymidylate kinase.